The primary structure comprises 89 residues: Small ribosomal subunit protein uS14 (89 aa).

The protein belongs to the universal ribosomal protein uS14 family. Part of the 30S ribosomal subunit. Contacts proteins S3 and S10.

Functionally, binds 16S rRNA, required for the assembly of 30S particles and may also be responsible for determining the conformation of the 16S rRNA at the A site. This chain is Small ribosomal subunit protein uS14, found in Aster yellows witches'-broom phytoplasma (strain AYWB).